Reading from the N-terminus, the 225-residue chain is Membrane protein (225 aa).

The Virion surface portion of the chain corresponds to 1–20; it reads MSNETNCTLDFEQSVELFKE. Residues 21 to 41 traverse the membrane as a helical segment; sequence YNLFITAFLLFLTIILQYGYA. Topologically, residues 42-51 are intravirion; it reads TRIRFIYILK. Residues 52–72 form a helical membrane-spanning segment; sequence MIVLWCFWPLNIAVGVISCIY. Residues 73 to 77 lie on the Virion surface side of the membrane; the sequence is PPNTG. The helical transmembrane segment at 78–98 threads the bilayer; that stretch reads GLVAAIILTVFACLSFVGYWI. At 99–225 the chain is on the intravirion side; that stretch reads QSCRLFKRCR…VATGGSSLYT (127 aa).

It belongs to the gammacoronaviruses M protein family. As to quaternary structure, homomultimer. Interacts with envelope E protein in the budding compartment of the host cell, which is located between endoplasmic reticulum and the Golgi complex. Forms a complex with HE and S proteins. Interacts with nucleocapsid N protein. This interaction probably participates in RNA packaging into the virus.

It is found in the virion membrane. Its subcellular location is the host Golgi apparatus membrane. Its function is as follows. Component of the viral envelope that plays a central role in virus morphogenesis and assembly via its interactions with other viral proteins. This Avian infectious bronchitis virus (strain KB8523) (IBV) protein is Membrane protein.